Consider the following 337-residue polypeptide: 2-oxoglutarate-dependent dioxygenase frbA (337 aa).

One can recognise a Fe2OG dioxygenase domain in the interval 175-290 (CSAELRLNHY…RHSLAYFGKP (116 aa)). Residues H202, D204, and H262 each coordinate Fe cation. R281 provides a ligand contact to 2-oxoglutarate.

This sequence belongs to the iron/ascorbate-dependent oxidoreductase family. Fe(2+) is required as a cofactor.

It functions in the pathway antifungal biosynthesis. Its function is as follows. 2-oxoglutarate-dependent dioxygenase; part of the gene cluster that mediates the biosynthesis of the antifungal antibiotic FR901469, an inhibitor of beta-1,3-glucansynthase, exerting antifungal activity against the pathogenes Candida albicans and Aspergillus fumigatus. FR901469 is a cyclic depsipeptide containing 12 amino acid residues and a fatty acid chain. The NRPS frbI contains 12 modules responsible for the formation of the depsipeptide backbone which is denoted as Acyl-Thr-Ala-Tyr-Val-4OHPro-Thr-Thr-3OHPro-threo3OHGln-Gly-Thr-Orn-OH (C71H116N14O23). The PKS frbB is probably involved in the production of the hydrocarbon chain, and the acyl-CoA ligase frbC might be involved in the transport of the chain to the peptide ptoduct of frbI. Because FR901469 contains 3 hydroxylated amino acid residues, the 3 oxygenases frbA, frbH, and frbJ might be participating in amino acid hydroxylation. As no thioesterase domains were detected in frbI or frbB, the thioesterases frbD and frbE may instead release and cyclize the products of the NRPS and PKS, respectively. The chain is 2-oxoglutarate-dependent dioxygenase frbA from Dothideomycetidae sp. (strain 11243) (Fungal sp. (strain No.11243)).